Here is a 390-residue protein sequence, read N- to C-terminus: MDSEEIIELERKFIMQTYTRQPIVLSHGKGATVWDIEGNSYIDCFAGVAVNSIGHAHPKVALAICHQAQRLIHSSNIYYTREQVELAKLLTAISPHDRVFFANSGAEANEGAIKLARKFTGKSEIIAAENSFHGRTLATVTATGQKKYSEPFRPLPEGFKHVPYGDIGAMADAVGDETAAIILEPVQGEGGVIIPPEGYLKDVQELARQNDVLLILDEVQTGFGRTGAMFASQLFGVEPDITTVAKAMGGGYPIGAVLANERVAMAFEPGDHGSTFGGNPWGCAAAIATIEVLMDEKLPERAAKMGSYFLGRLRQVLHGCDAVRDIRGVGLMIGIEIDGECAGVVDAAREMGVLINCTAGKVIRIVPPLVIKKEEIDAAVDVLGHVISDL.

Pyridoxal 5'-phosphate contacts are provided by residues 105-106 (GA) and Phe-132. Position 135 (Arg-135) interacts with N(2)-acetyl-L-ornithine. Residue 217-220 (DEVQ) participates in pyridoxal 5'-phosphate binding. Position 246 is an N6-(pyridoxal phosphate)lysine (Lys-246). Ser-274 contacts N(2)-acetyl-L-ornithine. Thr-275 serves as a coordination point for pyridoxal 5'-phosphate.

It belongs to the class-III pyridoxal-phosphate-dependent aminotransferase family. ArgD subfamily. In terms of assembly, homodimer. Pyridoxal 5'-phosphate serves as cofactor.

It is found in the cytoplasm. It carries out the reaction N(2)-acetyl-L-ornithine + 2-oxoglutarate = N-acetyl-L-glutamate 5-semialdehyde + L-glutamate. The protein operates within amino-acid biosynthesis; L-arginine biosynthesis; N(2)-acetyl-L-ornithine from L-glutamate: step 4/4. The polypeptide is Acetylornithine aminotransferase (Methanothermobacter thermautotrophicus (strain ATCC 29096 / DSM 1053 / JCM 10044 / NBRC 100330 / Delta H) (Methanobacterium thermoautotrophicum)).